The chain runs to 68 residues: Large ribosomal subunit protein uL29 (68 aa).

The protein belongs to the universal ribosomal protein uL29 family.

The protein is Large ribosomal subunit protein uL29 of Chlorobaculum tepidum (strain ATCC 49652 / DSM 12025 / NBRC 103806 / TLS) (Chlorobium tepidum).